Consider the following 22-residue polypeptide: NADH dehydrogenase [ubiquinone] 1 alpha subcomplex subunit 9 (22 aa).

A disordered region spans residues 1–22; the sequence is ASNLATGGAGPLIXKGTGGRSS.

This sequence belongs to the complex I NDUFA9 subunit family. As to quaternary structure, complex I is composed of about 45 different subunits. Requires FAD as cofactor.

The protein resides in the mitochondrion matrix. In terms of biological role, accessory subunit of the mitochondrial membrane respiratory chain NADH dehydrogenase (Complex I), that is believed not to be involved in catalysis. Complex I functions in the transfer of electrons from NADH to the respiratory chain. The immediate electron acceptor for the enzyme is believed to be ubiquinone. The protein is NADH dehydrogenase [ubiquinone] 1 alpha subcomplex subunit 9 of Solanum tuberosum (Potato).